Consider the following 557-residue polypeptide: DNA replication factor Cdt1 (557 aa).

The PIP-box K+4 motif motif lies at 1-25 (MAQSRVTDFYACRRPGLTTPRAKSI). Positions 20-113 (PRAKSICLTP…VCPSPVKRTK (94 aa)) are disordered. Thr28 bears the Phosphothreonine; by MAPK8 mark. Ser30 carries the post-translational modification Phosphoserine. Positions 65 to 67 (RRL) match the Cyclin-binding motif motif. Over residues 69–81 (LPGLDSCPSSLPE) the composition is skewed to low complexity. Positions 82 to 106 (PSSPAEPSPPADPSPPADPGSPVCP) are enriched in pro residues. Phosphoserine; by MAPK8 is present on Ser107. Residues 163–203 (PSTPDAKVPTEQPCVEKAPAYQRFHALAQPGLPGLVLPYKY) form an interaction with GMNN region. Residue Ser392 is modified to Phosphoserine. The disordered stretch occupies residues 397-427 (RSAEPGSPGTSTPPLPATPPATPPAASPSAL). The segment covering 407–422 (STPPLPATPPATPPAA) has biased composition (pro residues). Residues 463-557 (LERLPELARV…LAHHVHAEGL (95 aa)) are interaction with LRWD1.

This sequence belongs to the Cdt1 family. Interacts with GMNN; the interaction inhibits the binding of the MCM complex to origins of replication. Interacts with MCM6. Interacts with CDC6; are mutually dependent on one another for loading MCM complexes onto chromatin. Interacts with PCNA. Interacts with LRWD1 during G1 phase and during mitosis. Interacts with NDC80 subunit of the NDC80 complex; leading to kinetochore localization. Interacts with KAT7. Interacts with ubiquitin-binding protein FAF1; the interaction is likely to promote CDT1 degradation. In terms of processing, two independent E3 ubiquitin ligase complexes, SCF(SKP2) and the DCX(DTL) complex, mediated CDT1 degradation in S phase. Ubiquitinated by the DCX(DTL) complex, in response to DNA damage, leading to its degradation. Ubiquitination by the DCX(DTL) complex is necessary to ensure proper cell cycle regulation and is PCNA-dependent: interacts with PCNA via its PIP-box, while the presence of the containing the 'K+4' motif in the PIP box, recruit the DCX(DTL) complex, leading to its degradation. Phosphorylation at Thr-28 by CDK2 targets CDT1 for ubiquitynation by SCF(SKP2) E3 ubiquitin ligase and subsequent degradation. The interaction with GMNN protects it against ubiquitination. Deubiquitinated by USP37. Ubiquitinated and degraded by the SCF(FBXO31) complex during the G2 phase to prevent re-replication. Phosphorylation by cyclin A-dependent kinases at Thr-28 targets CDT1 for ubiquitynation by SCF(SKP2) E3 ubiquitin ligase and subsequent degradation. Phosphorylated at Thr-28 by MAPK8/JNK1, which blocks replication licensing in response to stress. Binding to GMNN is not affected by phosphorylation.

Its subcellular location is the nucleus. It is found in the chromosome. The protein resides in the centromere. It localises to the kinetochore. Its function is as follows. Required for both DNA replication and mitosis. DNA replication licensing factor, required for pre-replication complex assembly. Cooperates with CDC6 and the origin recognition complex (ORC) during G1 phase of the cell cycle to promote the loading of the mini-chromosome maintenance (MCM) complex onto DNA to generate pre-replication complexes (pre-RC). Required also for mitosis by promoting stable kinetochore-microtubule attachments. Potential oncogene. The sequence is that of DNA replication factor Cdt1 from Mus musculus (Mouse).